We begin with the raw amino-acid sequence, 628 residues long: 1-deoxy-D-xylulose-5-phosphate synthase (628 aa).

Residues His-72 and 113–115 (GHS) each bind thiamine diphosphate. Residue Asp-144 coordinates Mg(2+). Residues 145-146 (GA), Asn-173, Tyr-284, and Glu-363 each bind thiamine diphosphate. Mg(2+) is bound at residue Asn-173.

Belongs to the transketolase family. DXPS subfamily. In terms of assembly, homodimer. Mg(2+) is required as a cofactor. The cofactor is thiamine diphosphate.

The enzyme catalyses D-glyceraldehyde 3-phosphate + pyruvate + H(+) = 1-deoxy-D-xylulose 5-phosphate + CO2. It functions in the pathway metabolic intermediate biosynthesis; 1-deoxy-D-xylulose 5-phosphate biosynthesis; 1-deoxy-D-xylulose 5-phosphate from D-glyceraldehyde 3-phosphate and pyruvate: step 1/1. In terms of biological role, catalyzes the acyloin condensation reaction between C atoms 2 and 3 of pyruvate and glyceraldehyde 3-phosphate to yield 1-deoxy-D-xylulose-5-phosphate (DXP). The polypeptide is 1-deoxy-D-xylulose-5-phosphate synthase (Brevibacillus brevis (strain 47 / JCM 6285 / NBRC 100599)).